A 323-amino-acid chain; its full sequence is MNSSCCLSSVSPMLPNLSEHPAAPPASNRSGSGFCEQVFIKPEVFLALGIVSLMENILVILAVVRNGNLHSPMYFFLCSLAAADMLVSLSNSLETIMIAVINSDSLTLEDQFIQHMDNIFDSMICISLVASICNLLAIAIDRYVTIFYALRYHSIMTVRKALTLIGVIWVCCGICGVMFIIYSESKMVIVCLITMFFAMVLLMGTLYIHMFLFARLHVQRIAVLPPAGVVAPQQHSCMKGAVTITILLGVFIFCWAPFFLHLVLIITCPTNPYCICYTAHFNTYLVLIMCNSVIDPLIYAFRSLELRNTFKEILCGCNSMNLG.

Topologically, residues 1-37 (MNSSCCLSSVSPMLPNLSEHPAAPPASNRSGSGFCEQ) are extracellular. Asn-2, Asn-16, and Asn-28 each carry an N-linked (GlcNAc...) asparagine glycan. A helical membrane pass occupies residues 38-63 (VFIKPEVFLALGIVSLMENILVILAV). The Cytoplasmic portion of the chain corresponds to 64-75 (VRNGNLHSPMYF). The chain crosses the membrane as a helical span at residues 76 to 100 (FLCSLAAADMLVSLSNSLETIMIAV). Residues 101-118 (INSDSLTLEDQFIQHMDN) are Extracellular-facing. The chain crosses the membrane as a helical span at residues 119 to 140 (IFDSMICISLVASICNLLAIAI). The Cytoplasmic portion of the chain corresponds to 141-160 (DRYVTIFYALRYHSIMTVRK). Residues 161-181 (ALTLIGVIWVCCGICGVMFII) form a helical membrane-spanning segment. Residues 182-186 (YSESK) are Extracellular-facing. A helical membrane pass occupies residues 187 to 210 (MVIVCLITMFFAMVLLMGTLYIHM). The Cytoplasmic segment spans residues 211–245 (FLFARLHVQRIAVLPPAGVVAPQQHSCMKGAVTIT). Residues 246–268 (ILLGVFIFCWAPFFLHLVLIITC) form a helical membrane-spanning segment. At 269-277 (PTNPYCICY) the chain is on the extracellular side. Residues 278-301 (TAHFNTYLVLIMCNSVIDPLIYAF) form a helical membrane-spanning segment. At 302–323 (RSLELRNTFKEILCGCNSMNLG) the chain is on the cytoplasmic side. A lipid anchor (S-palmitoyl cysteine) is attached at Cys-315.

The protein belongs to the G-protein coupled receptor 1 family. As to expression, brain.

It is found in the cell membrane. Functionally, receptor for MSH (alpha, beta and gamma) and ACTH. This receptor is mediated by G proteins which activate adenylate cyclase. Required for expression of anticipatory patterns of activity and wakefulness during periods of limited nutrient availability and for the normal regulation of circadian clock activity in the brain. This is Melanocortin receptor 3 (Mc3r) from Mus musculus (Mouse).